Consider the following 622-residue polypeptide: Kinesin-like protein KIFC1 (622 aa).

The interval 1–88 (MKEALEPAKK…KRPGKRPDWD (88 aa)) is disordered. Positions 32 to 41 (SSLSQPQGPT) are enriched in polar residues. The stretch at 95-264 (DLTEELKCYR…QELKGNIRVF (170 aa)) forms a coiled coil. One can recognise a Kinesin motor domain in the interval 260–612 (NIRVFCRVRP…LRFASKVNQC (353 aa)). The disordered stretch occupies residues 279–323 (PGFLLFPHGPAGPSDPPTRLSLSRSDDRRSTLTRAPAPTTRHDFS). Phosphothreonine is present on Thr-309. Residue 360–367 (GQTGSGKT) participates in ATP binding.

The protein belongs to the TRAFAC class myosin-kinesin ATPase superfamily. Kinesin family. NCD subfamily. In terms of assembly, binds NUBP1 and NUBP2. Interacts with PPP1R42.

The protein resides in the nucleus. The protein localises to the cytoplasm. It is found in the cytoskeleton. It localises to the microtubule organizing center. Its subcellular location is the centrosome. The protein resides in the spindle. The protein localises to the early endosome. Its function is as follows. Minus end-directed microtubule-dependent motor required for bipolar spindle formation. May contribute to movement of early endocytic vesicles. Regulates cilium formation and structure. This is Kinesin-like protein KIFC1 from Cricetulus griseus (Chinese hamster).